The sequence spans 104 residues: Transcription elongation factor A protein-like 9 (104 aa).

Over residues 1–27 (MKSCQKMEGKPENESEPKHEEEPKPEE) the composition is skewed to basic and acidic residues. A disordered region spans residues 1–44 (MKSCQKMEGKPENESEPKHEEEPKPEEKPEEEEKLEEEAKAKGT).

Belongs to the TFS-II family. TFA subfamily.

Its subcellular location is the nucleus. In terms of biological role, may be involved in transcriptional regulation. In Homo sapiens (Human), this protein is Transcription elongation factor A protein-like 9.